Consider the following 267-residue polypeptide: Tryptophan synthase alpha chain (267 aa).

Residues E44 and D55 each act as proton acceptor in the active site.

Belongs to the TrpA family. Tetramer of two alpha and two beta chains.

It catalyses the reaction (1S,2R)-1-C-(indol-3-yl)glycerol 3-phosphate + L-serine = D-glyceraldehyde 3-phosphate + L-tryptophan + H2O. It participates in amino-acid biosynthesis; L-tryptophan biosynthesis; L-tryptophan from chorismate: step 5/5. Functionally, the alpha subunit is responsible for the aldol cleavage of indoleglycerol phosphate to indole and glyceraldehyde 3-phosphate. The chain is Tryptophan synthase alpha chain from Coxiella burnetii (strain Dugway 5J108-111).